The primary structure comprises 212 residues: Large ribosomal subunit protein uL3 (212 aa).

The interval 133 to 156 (SMTHGSKNHRLPGSTGAGTTPGRV) is disordered.

Belongs to the universal ribosomal protein uL3 family. Part of the 50S ribosomal subunit. Forms a cluster with proteins L14 and L19.

One of the primary rRNA binding proteins, it binds directly near the 3'-end of the 23S rRNA, where it nucleates assembly of the 50S subunit. This Crocosphaera subtropica (strain ATCC 51142 / BH68) (Cyanothece sp. (strain ATCC 51142)) protein is Large ribosomal subunit protein uL3.